A 180-amino-acid chain; its full sequence is UPF0340 protein llmg_0465 (180 aa).

This sequence belongs to the UPF0340 family.

The protein is UPF0340 protein llmg_0465 of Lactococcus lactis subsp. cremoris (strain MG1363).